A 263-amino-acid chain; its full sequence is Interleukin-22 receptor subunit alpha-2 (263 aa).

The N-terminal stretch at 1–21 is a signal peptide; the sequence is MMPKHCFLGFLISFFLTGVAG. 3 consecutive Fibronectin type-III domains span residues 26–68, 100–161, and 162–263; these read HESL…KIMF, GQRQ…TKID, and PPVM…VEIP. N-linked (GlcNAc...) asparagine glycosylation occurs at N56. A disulfide bridge links C110 with C118. N166, N171, N192, and N209 each carry an N-linked (GlcNAc...) asparagine glycan. C238 and C259 are joined by a disulfide.

The protein belongs to the type II cytokine receptor family. Expressed in placenta, spleen, breast, skin and lung. Also detected in intestinal tract, testis, brain, heart and thymus. No expression found in prostate, bladder, kidney, ovary, muscle, bone marrow, liver and uterus. Isoform 1 is expressed only in placenta. Isoform 2 is expressed in placenta and breast and at lower level in spleen, skin, thymus and stomach.

It localises to the secreted. In terms of biological role, isoform 2 is a receptor for IL22. Binds to IL22, prevents interaction with the functional IL-22R complex and blocks the activity of IL22 (in vitro). May play an important role as an IL22 antagonist in the regulation of inflammatory responses. Isoform 1 may play a role in establishing and maintaining successful pregnancy. In Homo sapiens (Human), this protein is Interleukin-22 receptor subunit alpha-2 (IL22RA2).